A 380-amino-acid chain; its full sequence is Cytochrome b (380 aa).

4 helical membrane passes run 34-54, 78-99, 114-134, and 179-199; these read FGSLLAMCLATQILTGLLLAM, WLIRNLHANGASFFFICIFLHI, WNTGVVLLLTLMATAFVGYVL, and FFALHFLLPFMIAGITITHLM. The heme b site is built by histidine 84 and histidine 98. 2 residues coordinate heme b: histidine 183 and histidine 197. Histidine 202 contributes to the a ubiquinone binding site. 4 helical membrane passes run 227–247, 289–309, 321–341, and 348–368; these read LKDILGLTLMLTPLLTLALFS, LGGVLALAASVLILLLIPFLH, LSQTLFWLLVANLLVLTWVGS, and FIIIGQMASFSYFTILLILFP.

Belongs to the cytochrome b family. In terms of assembly, the cytochrome bc1 complex contains 11 subunits: 3 respiratory subunits (MT-CYB, CYC1 and UQCRFS1), 2 core proteins (UQCRC1 and UQCRC2) and 6 low-molecular weight proteins (UQCRH/QCR6, UQCRB/QCR7, UQCRQ/QCR8, UQCR10/QCR9, UQCR11/QCR10 and a cleavage product of UQCRFS1). This cytochrome bc1 complex then forms a dimer. The cofactor is heme b.

The protein localises to the mitochondrion inner membrane. In terms of biological role, component of the ubiquinol-cytochrome c reductase complex (complex III or cytochrome b-c1 complex) that is part of the mitochondrial respiratory chain. The b-c1 complex mediates electron transfer from ubiquinol to cytochrome c. Contributes to the generation of a proton gradient across the mitochondrial membrane that is then used for ATP synthesis. This chain is Cytochrome b (MT-CYB), found in Tragopan satyra (Satyr tragopan).